A 35-amino-acid chain; its full sequence is Photosystem II reaction center protein M (35 aa).

A helical transmembrane segment spans residues 7–27 (GFLASLLFVLVPSVFLIVLYI).

This sequence belongs to the PsbM family. In terms of assembly, PSII is composed of 1 copy each of membrane proteins PsbA, PsbB, PsbC, PsbD, PsbE, PsbF, PsbH, PsbI, PsbJ, PsbK, PsbL, PsbM, PsbT, PsbX, PsbY, PsbZ, Psb30/Ycf12, peripheral proteins PsbO, CyanoQ (PsbQ), PsbU, PsbV and a large number of cofactors. It forms dimeric complexes.

It is found in the cellular thylakoid membrane. One of the components of the core complex of photosystem II (PSII). PSII is a light-driven water:plastoquinone oxidoreductase that uses light energy to abstract electrons from H(2)O, generating O(2) and a proton gradient subsequently used for ATP formation. It consists of a core antenna complex that captures photons, and an electron transfer chain that converts photonic excitation into a charge separation. This subunit is found at the monomer-monomer interface. The polypeptide is Photosystem II reaction center protein M (Synechococcus elongatus (strain ATCC 33912 / PCC 7942 / FACHB-805) (Anacystis nidulans R2)).